Consider the following 282-residue polypeptide: Pantothenate synthetase (282 aa).

Residue 30–37 (MGALHAGH) participates in ATP binding. The active-site Proton donor is His37. Gln61 provides a ligand contact to (R)-pantoate. Position 61 (Gln61) interacts with beta-alanine. 147–150 (GEKD) is a binding site for ATP. Gln153 is a binding site for (R)-pantoate. ATP contacts are provided by residues Val176 and 184–187 (LSSR).

This sequence belongs to the pantothenate synthetase family. As to quaternary structure, homodimer.

The protein localises to the cytoplasm. It catalyses the reaction (R)-pantoate + beta-alanine + ATP = (R)-pantothenate + AMP + diphosphate + H(+). It functions in the pathway cofactor biosynthesis; (R)-pantothenate biosynthesis; (R)-pantothenate from (R)-pantoate and beta-alanine: step 1/1. In terms of biological role, catalyzes the condensation of pantoate with beta-alanine in an ATP-dependent reaction via a pantoyl-adenylate intermediate. This is Pantothenate synthetase from Bacteroides fragilis (strain ATCC 25285 / DSM 2151 / CCUG 4856 / JCM 11019 / LMG 10263 / NCTC 9343 / Onslow / VPI 2553 / EN-2).